The sequence spans 112 residues: Small capsomere-interacting protein (112 aa).

It belongs to the herpesviridae small capsomere-interacting protein family. As to quaternary structure, interacts with the major capsid protein/MCP.

It is found in the virion. Its subcellular location is the host nucleus. Participates in the assembly of the infectious particles by decorating the outer surface of the capsid shell and thus forming a layer between the capsid and the tegument. Complexes composed of the major capsid protein and small capsomere-interacting protein/SCP assemble together in the host cytoplasm and are translocated to the nucleus, where they accumulate and participate in capsid assembly. This chain is Small capsomere-interacting protein, found in Homo sapiens (Human).